The sequence spans 231 residues: Putative N-acetylmannosamine-6-phosphate 2-epimerase (231 aa).

This sequence belongs to the NanE family.

It carries out the reaction an N-acyl-D-glucosamine 6-phosphate = an N-acyl-D-mannosamine 6-phosphate. The protein operates within amino-sugar metabolism; N-acetylneuraminate degradation; D-fructose 6-phosphate from N-acetylneuraminate: step 3/5. Converts N-acetylmannosamine-6-phosphate (ManNAc-6-P) to N-acetylglucosamine-6-phosphate (GlcNAc-6-P). The polypeptide is Putative N-acetylmannosamine-6-phosphate 2-epimerase (Listeria monocytogenes serotype 4b (strain CLIP80459)).